Here is a 542-residue protein sequence, read N- to C-terminus: N-substituted formamide deformylase (542 aa).

The propeptide occupies 1 to 2; sequence MT.

In terms of assembly, homodimer. Zn(2+) is required as a cofactor.

It catalyses the reaction N-benzylformamide + H2O = benzylamine + formate. With respect to regulation, completely inhibited by HgCl(2), CuCl, CuCl(2) and AgNO(3). Partially inhibited by ZnCl(2) and SnCl(2). Almost completely inhibited by the reducing reagent DTT. Partially inhibited by phenylhydrazine. Moderately inhibited by phenanthroline and 8-hydroxyquinoline. Completely inhibited by the thiol-specific inhibitors N-ethylmaleimide and p-chloromercuribenzoate. Not inhibited by the carbonyl-specific inhibitors aminoguanidine and semicarbazide, the chelating agents alpha,alpha'-dipyridyl, KCN, diethyldithiocarbamate and EDTA, or the oxidizing reagents and serine-modifying reagents such as H(2)O(2), ammonium persulfate, phenylmethanesulfonyl fluoride and diisopropyl fluorophosphates. Functionally, hydrolyzes N-substituted formamides, but not amides. N-benzylformamide is the preferred substrate, while N-butylformamide is hydrolyzed at a much lower rate. Has very low activity towards allylformamide, N-(2-cyclohex-1-enylethyl)formamide and N-(alpha-methylbenzyl)formamide. The protein is N-substituted formamide deformylase of Arthrobacter pascens.